A 157-amino-acid polypeptide reads, in one-letter code: 6,7-dimethyl-8-ribityllumazine synthase 2 (157 aa).

5-amino-6-(D-ribitylamino)uracil contacts are provided by residues tryptophan 21, 55-57 (AYE), and 79-81 (FVV). Arginine 87 serves as the catalytic Proton donor. Serine 112 serves as a coordination point for 5-amino-6-(D-ribitylamino)uracil. A (2S)-2-hydroxy-3-oxobutyl phosphate-binding site is contributed by histidine 126.

The protein belongs to the DMRL synthase family. In terms of assembly, homodecamer, arranged as a dimer of pentamers.

It catalyses the reaction (2S)-2-hydroxy-3-oxobutyl phosphate + 5-amino-6-(D-ribitylamino)uracil = 6,7-dimethyl-8-(1-D-ribityl)lumazine + phosphate + 2 H2O + H(+). The protein operates within cofactor biosynthesis; riboflavin biosynthesis; riboflavin from 2-hydroxy-3-oxobutyl phosphate and 5-amino-6-(D-ribitylamino)uracil: step 1/2. In terms of biological role, catalyzes the formation of 6,7-dimethyl-8-ribityllumazine by condensation of 5-amino-6-(D-ribitylamino)uracil with 3,4-dihydroxy-2-butanone 4-phosphate. This is the penultimate step in the biosynthesis of riboflavin. The polypeptide is 6,7-dimethyl-8-ribityllumazine synthase 2 (ribH2) (Mesorhizobium japonicum (strain LMG 29417 / CECT 9101 / MAFF 303099) (Mesorhizobium loti (strain MAFF 303099))).